Reading from the N-terminus, the 1233-residue chain is Reverse gyrase 2 (1233 aa).

The segment at 1-41 (MNTIPSSNYLSSCPNCGRVISAERLYKGSVCSECLEEDREF) adopts an RG N-terminal-type zinc-finger fold. The Zn(2+) site is built by Cys13, Cys16, Cys31, and Cys34. ATP-binding positions include Gln89 and 106–113 (APPGLGKT). Residues 93-296 (IIRVLRKESF…ALMGFRPGSS (204 aa)) form the Helicase ATP-binding domain. The DEAD box motif lies at 212 to 215 (DDVD). The tract at residues 606-1233 (QKVKTVLFIV…DIYYEIKSIR (628 aa)) is topoisomerase I. The Toprim domain occupies 610–774 (TVLFIVESPN…NIKRAEFHEV (165 aa)). Glu616 is a Mg(2+) binding site. Residues 691–720 (IKKCINGHQFTDFEQGNQCPKCHTTQIILD) form an RG C-terminal-type; atypical zinc finger. Zn(2+) is bound by residues Cys694, His698, Cys709, and Cys712. Asp743 contacts Mg(2+). Residues 790-1233 (NVNLVKSQIV…DIYYEIKSIR (444 aa)) enclose the Topo IA-type catalytic domain. The active-site O-(5'-phospho-DNA)-tyrosine intermediate is the Tyr947.

In the N-terminal section; belongs to the DEAD box helicase family. DDVD subfamily. It in the C-terminal section; belongs to the type IA topoisomerase family. As to quaternary structure, monomer. Zn(2+) is required as a cofactor. Requires Mg(2+) as cofactor.

The protein resides in the cytoplasm. It carries out the reaction ATP + H2O = ADP + phosphate + H(+). Functionally, modifies the topological state of DNA by introducing positive supercoils in an ATP-dependent process, increasing the linking number in steps of +1. Binds to single-stranded DNA, transiently cleaves and then rejoins the ends, introducing a positive supercoil in the process. The scissile phosphodiester is attacked by the catalytic tyrosine of the enzyme, resulting in the formation of a DNA-(5'-phosphotyrosyl)-enzyme intermediate. Probably involved in rewinding DNA strands in regions of the chromosome that have opened up to allow replication, transcription, DNA repair and/or for DNA protection. The polypeptide is Reverse gyrase 2 (Sulfurisphaera tokodaii (strain DSM 16993 / JCM 10545 / NBRC 100140 / 7) (Sulfolobus tokodaii)).